Here is a 283-residue protein sequence, read N- to C-terminus: MSARAIDGNALSRHLRHEVAQRAATLREHGITPGLAVILVGENPASQVYVRNKVKACHDSGLHSVLEHYPAAMTEAELLARVQALNADPAIHGILVQLPLPPHIDAHRVIETIAPHKDVDGFHVASAGALMVGQPGFKPCTPYGCMKMLESIGYDPKGKHAVVIGRSNIVGKPMAMLLLQANATVTVCHSATPDLALHTRQADIVVAAVGKRKVLTADMVKPGAVVIDVGMNRDDHGKLCGDVDYAGVAKVAGWITPVPGGVGPMTITMLLMNTLESAERLVG.

NADP(+) contacts are provided by residues 165–167 and S190; that span reads GRS.

The protein belongs to the tetrahydrofolate dehydrogenase/cyclohydrolase family. As to quaternary structure, homodimer.

It catalyses the reaction (6R)-5,10-methylene-5,6,7,8-tetrahydrofolate + NADP(+) = (6R)-5,10-methenyltetrahydrofolate + NADPH. It carries out the reaction (6R)-5,10-methenyltetrahydrofolate + H2O = (6R)-10-formyltetrahydrofolate + H(+). It functions in the pathway one-carbon metabolism; tetrahydrofolate interconversion. In terms of biological role, catalyzes the oxidation of 5,10-methylenetetrahydrofolate to 5,10-methenyltetrahydrofolate and then the hydrolysis of 5,10-methenyltetrahydrofolate to 10-formyltetrahydrofolate. This is Bifunctional protein FolD from Methylibium petroleiphilum (strain ATCC BAA-1232 / LMG 22953 / PM1).